The sequence spans 71 residues: Light-harvesting protein B-800/850 alpha chain (71 aa).

Residues Met-1–Gly-15 are Cytoplasmic-facing. A helical transmembrane segment spans residues Val-16–Ala-36. Position 31 (His-31) interacts with a bacteriochlorophyll. Residues Lys-37 to Lys-50 are Periplasmic-facing. Residues Ala-51–Gln-71 traverse the membrane as a helical segment.

This sequence belongs to the antenna complex alpha subunit family. An alpha/beta heterodimer conjugated to 3 bacteriochlorophyll molecules. The core complex is formed by different alpha and beta chains, binding bacteriochlorophyll molecules, and arranged most probably in tetrameric structures disposed around the reaction center. The non-pigmented gamma chains may constitute additional components.

It localises to the cell membrane. Its function is as follows. Antenna complexes are light-harvesting systems, which transfer the excitation energy to the reaction centers. This is Light-harvesting protein B-800/850 alpha chain (pucA) from Rubrivivax gelatinosus (Rhodocyclus gelatinosus).